The sequence spans 202 residues: Superoxide dismutase [Mn/Fe] (202 aa).

Fe(3+) is bound by residues His-27, His-81, Asp-163, and His-167. The Mn(2+) site is built by His-27, His-81, Asp-163, and His-167.

It belongs to the iron/manganese superoxide dismutase family. Mn(2+) is required as a cofactor. The cofactor is Fe(3+).

The catalysed reaction is 2 superoxide + 2 H(+) = H2O2 + O2. Functionally, destroys superoxide anion radicals which are normally produced within the cells and which are toxic to biological systems. Catalyzes the dismutation of superoxide anion radicals into O2 and H2O2 by successive reduction and oxidation of the transition metal ion at the active site. The sequence is that of Superoxide dismutase [Mn/Fe] (sodA) from Streptococcus agalactiae serotype V (strain ATCC BAA-611 / 2603 V/R).